Consider the following 427-residue polypeptide: MSAIVDIIGREILDSRGNPTVECDVLLESGTMGRAAVPSGASTGSREAIELRDGETGRYGGKGVLKAVEHINTEISEAIMGLDASEQAFLDKTLLELDGTDNKSRLGANAMLAVSMAVAKAAAEEAGLPLYRYFGGSGAMQLPVPMMNIVNGGAHANNSLDIQEFMIVPVSQPTFREALRCGAEVFHALKKILSDRGMSTAVGDEGGFAPNFGSNDECLSTILQAIEKAGYRAGEDVLLALDCAASEFYHDGKYQLAGEGLQLSSTEFADYLANLADKFPIVSIEDGMHESDWAGWKTLTDKLGKKVQLVGDDLFVTNTRILKEGIEKGIANSILIKINQIGTLTETFAAIEMAKRAGYTAVISHRSGETEDSTIADIAVGLNAGQIKTGSLSRSDRISKYNQLLRIEEDLGDIASYPGKSAFYNLR.

A (2R)-2-phosphoglycerate-binding site is contributed by glutamine 163. The active-site Proton donor is glutamate 205. Residues aspartate 242, glutamate 285, and aspartate 312 each contribute to the Mg(2+) site. 4 residues coordinate (2R)-2-phosphoglycerate: lysine 337, arginine 366, serine 367, and lysine 388. Lysine 337 serves as the catalytic Proton acceptor.

The protein belongs to the enolase family. It depends on Mg(2+) as a cofactor.

It localises to the cytoplasm. The protein localises to the secreted. Its subcellular location is the cell surface. It catalyses the reaction (2R)-2-phosphoglycerate = phosphoenolpyruvate + H2O. The protein operates within carbohydrate degradation; glycolysis; pyruvate from D-glyceraldehyde 3-phosphate: step 4/5. Functionally, catalyzes the reversible conversion of 2-phosphoglycerate (2-PG) into phosphoenolpyruvate (PEP). It is essential for the degradation of carbohydrates via glycolysis. This is Enolase from Paraburkholderia phytofirmans (strain DSM 17436 / LMG 22146 / PsJN) (Burkholderia phytofirmans).